Consider the following 476-residue polypeptide: Bifunctional protein HldE (476 aa).

Positions M1–G319 are ribokinase. Position 195 to 198 (N195 to E198) interacts with ATP. The active site involves D264. A cytidylyltransferase region spans residues M344–G476.

The protein in the N-terminal section; belongs to the carbohydrate kinase PfkB family. This sequence in the C-terminal section; belongs to the cytidylyltransferase family. Homodimer.

The catalysed reaction is D-glycero-beta-D-manno-heptose 7-phosphate + ATP = D-glycero-beta-D-manno-heptose 1,7-bisphosphate + ADP + H(+). It catalyses the reaction D-glycero-beta-D-manno-heptose 1-phosphate + ATP + H(+) = ADP-D-glycero-beta-D-manno-heptose + diphosphate. Its pathway is nucleotide-sugar biosynthesis; ADP-L-glycero-beta-D-manno-heptose biosynthesis; ADP-L-glycero-beta-D-manno-heptose from D-glycero-beta-D-manno-heptose 7-phosphate: step 1/4. The protein operates within nucleotide-sugar biosynthesis; ADP-L-glycero-beta-D-manno-heptose biosynthesis; ADP-L-glycero-beta-D-manno-heptose from D-glycero-beta-D-manno-heptose 7-phosphate: step 3/4. In terms of biological role, catalyzes the phosphorylation of D-glycero-D-manno-heptose 7-phosphate at the C-1 position to selectively form D-glycero-beta-D-manno-heptose-1,7-bisphosphate. Catalyzes the ADP transfer from ATP to D-glycero-beta-D-manno-heptose 1-phosphate, yielding ADP-D-glycero-beta-D-manno-heptose. The chain is Bifunctional protein HldE from Photobacterium profundum (strain SS9).